Consider the following 620-residue polypeptide: uncharacterized protein (620 aa).

The Radical SAM core domain maps to 324–586 (RRYVTIAIIK…HPWEKGIYPT (263 aa)). [4Fe-4S] cluster-binding residues include cysteine 338, cysteine 342, and cysteine 345. At lysine 552 the chain carries N6-(pyridoxal phosphate)lysine.

The protein belongs to the radical SAM superfamily. KamA family. [4Fe-4S] cluster is required as a cofactor. It depends on pyridoxal 5'-phosphate as a cofactor.

This is an uncharacterized protein from Methanocaldococcus jannaschii (strain ATCC 43067 / DSM 2661 / JAL-1 / JCM 10045 / NBRC 100440) (Methanococcus jannaschii).